The primary structure comprises 446 residues: Inward rectifier potassium channel 4 (446 aa).

Residues 1–55 (MHGHSRNGQAHVPRRKRRNRFVKKNGQCNVYFANLSNKSQRYMADIFTTCVDTRW) lie on the Cytoplasmic side of the membrane. Residues 56-80 (RYMLMIFSAAFLVSWLFFGLLFWCI) form a helical membrane-spanning segment. At 81–120 (AFFHGDLEPSPSGPTAGGPGGNGGGAAPTAAKPCIMHVNG) the chain is on the extracellular side. Residues 91–111 (PSGPTAGGPGGNGGGAAPTAA) are val/Gly/Ala/Pro stretch. The segment at residues 121–132 (FLGAFLFSVETQ) is an intramembrane region (helical; Pore-forming). Positions 133–139 (TTIGYGF) form an intramembrane region, pore-forming. The Selectivity filter signature appears at 134–139 (TIGYGF). The Extracellular portion of the chain corresponds to 140–148 (RCVTEECPL). Residues 149 to 170 (AVIAVVVQSIVGCVIDSFMIGT) traverse the membrane as a helical segment. Residues 171 to 446 (IMAKMPRPKK…NISYRRESAI (276 aa)) are Cytoplasmic-facing. Residues 444-446 (SAI) carry the PDZ-binding motif.

This sequence belongs to the inward rectifier-type potassium channel (TC 1.A.2.1) family. KCNJ4 subfamily. Homomultimeric and heteromultimeric association with KCNJ2 and KCNJ12. Interacts with DLG2 and DLG4. Associates, via its PDZ-recognition domain, with a complex containing LIN7A, LIN7B, LIN7C, DLG1, CASK and APBA1. Interacts with TAX1BP3. TAX1BP3 competes with LIN7 family members for KCNJ4 binding. In terms of tissue distribution, detected in kidney distal convoluted tubules (at protein level). Widely expressed throughout the brain. Also found in some peripheral tissues.

Its subcellular location is the cell membrane. It localises to the cytoplasmic vesicle membrane. It is found in the postsynaptic cell membrane. It carries out the reaction K(+)(in) = K(+)(out). Inward rectifier potassium channels are characterized by a greater tendency to allow potassium to flow into the cell rather than out of it. Their voltage dependence is regulated by the concentration of extracellular potassium; as external potassium is raised, the voltage range of the channel opening shifts to more positive voltages. The inward rectification is mainly due to the blockage of outward current by internal magnesium. Can be blocked by extracellular barium and cesium. The sequence is that of Inward rectifier potassium channel 4 (Kcnj4) from Rattus norvegicus (Rat).